The sequence spans 154 residues: Ribosome maturation factor RimP (154 aa).

This sequence belongs to the RimP family.

The protein localises to the cytoplasm. Its function is as follows. Required for maturation of 30S ribosomal subunits. In Finegoldia magna (strain ATCC 29328 / DSM 20472 / WAL 2508) (Peptostreptococcus magnus), this protein is Ribosome maturation factor RimP.